The following is a 401-amino-acid chain: Putative hetero-Diels-Alderase asR5 (401 aa).

Positions 1-21 (MRRSFLISAALGLSMSTPALA) are cleaved as a signal peptide. Asn-71, Asn-77, Asn-240, and Asn-334 each carry an N-linked (GlcNAc...) asparagine glycan.

The protein belongs to the eupF Diels-Alderase family.

The protein operates within secondary metabolite biosynthesis; terpenoid biosynthesis. Functionally, putative hetero-Diels-Alderase; part of the gene cluster that mediates the biosynthesis of xenovulene A, an unusual meroterpenoid that has potent inhibitory effects on the human gamma-aminobutyrate A (GABAA) benzodiazepine receptor. The first step of xenovulene A biosynthesis is the biosynthesis of 3-methylorcinaldehyde performed by the non-reducing polyketide synthase aspks1. The salicylate hydroxylase asL1 then catalyzes the oxidative dearomatization of 3-methylorcinaldehyde to yield a dearomatized hydroxycyclohexadione. The 2-oxoglutarate-dependent dioxygenase asL3 further catalyzes the oxidative ring expansion to provide the first tropolone metabolite. The cytochrome P450 monooxygenase asR2 allows the synthesis of tropolone hemiacetal. In parallel, a previously unrecognised class of terpene cyclase, asR6, produces alpha-humulene from farnesylpyrophosphate (FPP). The putative Diels-Alderase asR5 probably catalyzes the formation of the tropolone-humulene skeleton by linking humulene and the polyketide moiety. Oxidative-ring contractions catalyzed by asL4 and asL6 then processively remove carbon atoms from the polyketide to yield xenovulene A. The chain is Putative hetero-Diels-Alderase asR5 from Sarocladium schorii (Acremonium strictum (strain IMI 501407)).